Reading from the N-terminus, the 426-residue chain is L-cysteine:1D-myo-inositol 2-amino-2-deoxy-alpha-D-glucopyranoside ligase (426 aa).

Cysteine 45 is a Zn(2+) binding site. L-cysteinyl-5'-AMP contacts are provided by residues 45 to 48, threonine 60, and 83 to 85; these read CGIT and NVT. The 'HIGH' region motif lies at 47–57; that stretch reads ITPYDATHIGH. The 'ERGGDP' region signature appears at 199 to 204; it reads ERGGDP. Tryptophan 239 provides a ligand contact to L-cysteinyl-5'-AMP. Cysteine 243 contributes to the Zn(2+) binding site. Residue 261–263 participates in L-cysteinyl-5'-AMP binding; that stretch reads GSD. Histidine 268 contacts Zn(2+). Valine 294 lines the L-cysteinyl-5'-AMP pocket. Positions 300–304 match the 'KMSKS' region motif; that stretch reads KMSKS.

Belongs to the class-I aminoacyl-tRNA synthetase family. MshC subfamily. Monomer. Requires Zn(2+) as cofactor.

It catalyses the reaction 1D-myo-inositol 2-amino-2-deoxy-alpha-D-glucopyranoside + L-cysteine + ATP = 1D-myo-inositol 2-(L-cysteinylamino)-2-deoxy-alpha-D-glucopyranoside + AMP + diphosphate + H(+). Catalyzes the ATP-dependent condensation of GlcN-Ins and L-cysteine to form L-Cys-GlcN-Ins. This chain is L-cysteine:1D-myo-inositol 2-amino-2-deoxy-alpha-D-glucopyranoside ligase, found in Clavibacter michiganensis subsp. michiganensis (strain NCPPB 382).